Consider the following 122-residue polypeptide: MIQTKSRLDVADNTGAKSVLCIKVLGGSKRRYASVGDIIKVSIKEAAPRGRVKKGEVYSAVVVRTAKGIRRGDGSLVKFDGNAAVLLNAKLEPIGTRIFGPVTRELRTERFMKIVSLAPEVL.

It belongs to the universal ribosomal protein uL14 family. As to quaternary structure, part of the 50S ribosomal subunit. Forms a cluster with proteins L3 and L19. In the 70S ribosome, L14 and L19 interact and together make contacts with the 16S rRNA in bridges B5 and B8.

Functionally, binds to 23S rRNA. Forms part of two intersubunit bridges in the 70S ribosome. This is Large ribosomal subunit protein uL14 from Paracidovorax citrulli (strain AAC00-1) (Acidovorax citrulli).